Here is a 175-residue protein sequence, read N- to C-terminus: Sec-independent protein translocase protein TatB (175 aa).

The helical transmembrane segment at 1–21 threads the bilayer; sequence MFDIGWSELVLIGVVALIAIG. Disordered regions lie at residues 100–132 and 155–175; these read KPAE…PTPE and QAPV…AKAS. Positions 111 to 132 are enriched in low complexity; that stretch reads EAPATSSEALTTPTTPEAPTPE.

Belongs to the TatB family. The Tat system comprises two distinct complexes: a TatABC complex, containing multiple copies of TatA, TatB and TatC subunits, and a separate TatA complex, containing only TatA subunits. Substrates initially bind to the TatABC complex, which probably triggers association of the separate TatA complex to form the active translocon.

It localises to the cell inner membrane. In terms of biological role, part of the twin-arginine translocation (Tat) system that transports large folded proteins containing a characteristic twin-arginine motif in their signal peptide across membranes. Together with TatC, TatB is part of a receptor directly interacting with Tat signal peptides. TatB may form an oligomeric binding site that transiently accommodates folded Tat precursor proteins before their translocation. In Bradyrhizobium diazoefficiens (strain JCM 10833 / BCRC 13528 / IAM 13628 / NBRC 14792 / USDA 110), this protein is Sec-independent protein translocase protein TatB.